Here is a 136-residue protein sequence, read N- to C-terminus: MSQLVYFSSSSENTQRFIERLGLPAVRIPLNERKQIQVDEPYILIVPSYGGGGTAGAVPRQVIRFLNDEHNRALLRGVIASGNRNFGEAYGRAGDVIARKCGVPWLYRFELMGTQSDIENVRKGVTEFWQRQPQNA.

Belongs to the NrdI family.

In terms of biological role, probably involved in ribonucleotide reductase function. The sequence is that of Protein NrdI from Shigella dysenteriae serotype 1 (strain Sd197).